The primary structure comprises 159 residues: Ribosomal RNA large subunit methyltransferase H (159 aa).

Residues Leu-76, Gly-108, and 127 to 132 (FSKMTF) each bind S-adenosyl-L-methionine.

Belongs to the RNA methyltransferase RlmH family. Homodimer.

It is found in the cytoplasm. The catalysed reaction is pseudouridine(1915) in 23S rRNA + S-adenosyl-L-methionine = N(3)-methylpseudouridine(1915) in 23S rRNA + S-adenosyl-L-homocysteine + H(+). Its function is as follows. Specifically methylates the pseudouridine at position 1915 (m3Psi1915) in 23S rRNA. The sequence is that of Ribosomal RNA large subunit methyltransferase H from Clostridium botulinum (strain 657 / Type Ba4).